We begin with the raw amino-acid sequence, 223 residues long: Neurotrophic factor BDNF precursor form (223 aa).

Residues 1-5 (SCMKA) form the signal peptide. Residues 6–114 (APMKEASIRG…AANMSMRVRR (109 aa)) constitute a propeptide that is removed on maturation. Asn-107 carries an N-linked (GlcNAc...) asparagine glycan. 2 disulfides stabilise this stretch: Cys-127/Cys-194 and Cys-172/Cys-223.

Belongs to the NGF-beta family.

It is found in the secreted. Promotes the survival of neuronal populations that are all located either in the central nervous system or directly connected to it. This chain is Neurotrophic factor BDNF precursor form (BDNF), found in Tropidophis haetianus (Haitian dwarf boa).